Reading from the N-terminus, the 467-residue chain is Prenyltransferase GME11375 (467 aa).

Glu93 contributes to the L-tryptophan binding site. Dimethylallyl diphosphate is bound by residues Arg108, Lys196, Tyr198, Lys266, Tyr268, and Tyr436.

The protein belongs to the tryptophan dimethylallyltransferase family.

It functions in the pathway secondary metabolite biosynthesis. Prenyltransferase; part of the gene cluster that mediates the biosynthesis of dibenzodioxocinones such as pestalotiollide B, a novel class of inhibitors against cholesterol ester transfer protein (CEPT). The biosynthesis initiates from condensation of acetate and malonate units catalyzed by the non-reducing PKS pks8/GME11356. Pks8/GME11356 lacks a thioesterase (TE) domain, which is important to the cyclizing of the third ring of atrochrysone carboxylic acid, and the esterase GME11355 might play the role of TE and catalyzes the cyclization reaction of the C ring. The lactamase-like protein GME11357 (or other beta-lactamases in Pestalotiopsis microspora) probably hydrolyzes the thioester bond between the ACP of pks8/GME11356 and the intermediate to release atrochrysone carboxylic acid, which is spontaneously dehydrates to form endocrocin anthrone. Endocrocin anthrone is further converted to emodin via the endocrocin intermediate. Emodin is then oxidized by several enzymes such as the Baeyer-Villiger oxidase GME11358, the oxidoreductase GME11367, the short chain dehydrogenase/reductase GME11373, as well as by other oxidoreductases from the cluster, to modify the A and C rings and open the B ring, and finally yield monodictyphenone. The prenyltransferase GME11375 may catalyze the addition reaction between the C5 side chains and the carbon bone of dibenzodioxocinones. The remaining biochemical reactions to the final product dibenzodioxocinones should be methylation catalyzed by methyltransferase GME11366 and reduction and lactonization reaction catalyzed by a series of oxidordeuctases. The chain is Prenyltransferase GME11375 from Pestalotiopsis microspora.